A 229-amino-acid polypeptide reads, in one-letter code: ADP-ribosylation factor-like protein 6-interacting protein 4 (229 aa).

Residues 1-20 (MAHVGSRKRSRSRSRSRSGR) are compositionally biased toward basic residues. Positions 1–152 (MAHVGSRKRS…EDNDGPVLTD (152 aa)) are disordered. Residues 21-35 (RGSEKRSKRSSKDAS) are compositionally biased toward basic and acidic residues. Low complexity predominate over residues 66–87 (SRSSSTSSSSSSSSSASSSSSS). Residues 90 to 117 (RKKRAKHKEKKRKKKKKKRKKKLKKRVK) are compositionally biased toward basic residues. Ser-140 and Ser-174 each carry phosphoserine. Lys-191 is covalently cross-linked (Glycyl lysine isopeptide (Lys-Gly) (interchain with G-Cter in SUMO2)).

It belongs to the ARL6IP4 family. In terms of assembly, interacts with ZCCHC17. Interacts with SRSF2. Interacts with ARL6. Widely expressed. Expressed at high level in testis and thymus.

It localises to the nucleus. The protein resides in the nucleolus. The protein localises to the nucleus speckle. In terms of biological role, involved in modulating alternative pre-mRNA splicing with either 5' distal site activation or preferential use of 3' proximal site. The sequence is that of ADP-ribosylation factor-like protein 6-interacting protein 4 (Arl6ip4) from Mus musculus (Mouse).